A 128-amino-acid polypeptide reads, in one-letter code: Probable soluble cytochrome b562 2 (128 aa).

The signal sequence occupies residues 1–22 (MGKTLMALITAALLSTSSLVMA). 2 residues coordinate heme b: M29 and H124.

Belongs to the cytochrome b562 family. The cofactor is heme b.

It localises to the periplasm. In terms of biological role, electron-transport protein of unknown function. This is Probable soluble cytochrome b562 2 (cybC2) from Yersinia pestis.